Consider the following 509-residue polypeptide: DNA nucleotidylexotransferase (509 aa).

The tract at residues 1–24 (MDPPRASHLSPRKKRPRQTGALMA) is disordered. The Nuclear localization signal motif lies at 11-17 (PRKKRPR). A BRCT domain is found at 27-124 (PQDIKFQDLV…KPVEMTGKHQ (98 aa)). At S134 the chain carries Phosphoserine. Residues 151-509 (SQYACQRRTT…DYIEPWERNA (359 aa)) are mediates interaction with DNTTIP2. An involved in DNA binding region spans residues 258-262 (VGLKT). Residues 333–338 (GFRRGK) and 342–345 (HDVD) contribute to the a 2'-deoxyribonucleoside 5'-triphosphate site. Mg(2+)-binding residues include D343, D345, and D433. Residue 448–449 (GW) coordinates a 2'-deoxyribonucleoside 5'-triphosphate.

This sequence belongs to the DNA polymerase type-X family. As to quaternary structure, interacts with PRP19 and DNTTIP1. Forms a ternary complex with DNTTIP2 and core histone. Released from this complex by PCNA. Interacts with TRERF1. The cofactor is Mg(2+).

Its subcellular location is the nucleus. The enzyme catalyses DNA(n) + a 2'-deoxyribonucleoside 5'-triphosphate = DNA(n+1) + diphosphate. Its function is as follows. Template-independent DNA polymerase which catalyzes the random addition of deoxynucleoside 5'-triphosphate to the 3'-end of a DNA initiator. One of the in vivo functions of this enzyme is the addition of nucleotides at the junction (N region) of rearranged Ig heavy chain and T-cell receptor gene segments during the maturation of B- and T-cells. The sequence is that of DNA nucleotidylexotransferase (DNTT) from Homo sapiens (Human).